A 258-amino-acid chain; its full sequence is 14-3-3-like protein F (258 aa).

It belongs to the 14-3-3 family.

The protein is 14-3-3-like protein F of Nicotiana tabacum (Common tobacco).